The following is a 705-amino-acid chain: Structure-specific endonuclease subunit SLX1 homolog (705 aa).

In terms of domain architecture, GIY-YIG spans 4 to 90; that stretch reads RFHCVYLLTS…TASARLRHAI (87 aa). Disordered regions lie at residues 155-192 and 290-323; these read RASSPRVGTQQHSQRSSSLQGQADGVATPPLPALDSKG and ASFASDSDDEDTRRFAPYCPSTGSRTPSPQRVHT. Composition is skewed to polar residues over residues 160–175 and 310–320; these read RVGTQQHSQRSSSLQG and STGSRTPSPQR. The segment at 446–526 adopts an SLX1-type zinc-finger fold; it reads CSLCTLPLQP…PSQPCPCPLC (81 aa). A compositionally biased stretch (low complexity) spans 595 to 604; the sequence is KGAGEAPGAA. Residues 595–628 are disordered; the sequence is KGAGEAPGAASTVRASTMHVGPARRDAPRVSSPS.

Belongs to the SLX1 family. Forms a heterodimer with a member of the SLX4 family. A divalent metal cation is required as a cofactor.

The protein resides in the nucleus. In terms of biological role, catalytic subunit of a heterodimeric structure-specific endonuclease that resolves DNA secondary structures generated during DNA repair and recombination. Has endonuclease activity towards branched DNA substrates, introducing single-strand cuts in duplex DNA close to junctions with ss-DNA. The protein is Structure-specific endonuclease subunit SLX1 homolog of Leishmania infantum.